The primary structure comprises 982 residues: Protein lin-10 (982 aa).

Polar residues predominate over residues 1–16; the sequence is MSSEAVAQATAATTSP. Disordered stretches follow at residues 1–55, 119–228, 269–327, 432–511, and 525–593; these read MSSE…MIPP, QPAL…RTDS, TVAD…STVP, FAQQ…GTDD, and QREQ…SKET. The segment covering 33–44 has biased composition (gly residues); that stretch reads KGGGAGGGGGGE. Residues 119–134 are compositionally biased toward low complexity; it reads QPALQQPRPSSQASSS. 2 stretches are compositionally biased toward polar residues: residues 143 to 156 and 169 to 190; these read RQTAGSVVSSNVSP and ETSGVVQNNDELLVPTSTSSDV. Basic and acidic residues predominate over residues 211–228; sequence GEEKSEEKRKLSGDRTDS. Residues 301 to 318 show a composition bias toward polar residues; sequence SLNQLRSSFNLPDDSTTV. Low complexity-rich tracts occupy residues 432 to 445 and 454 to 464; these read FAQQQIAQSAAPTP and PSTSSGPSGAL. Residues 490–501 show a composition bias toward polar residues; sequence NGTSTSTTNGAQ. A compositionally biased stretch (low complexity) spans 539 to 550; it reads QEAATAAQEAAE. Residues 577 to 593 show a composition bias toward basic and acidic residues; it reads GAERRGSVDKKKNSKET. The 185-residue stretch at 604-788 folds into the PID domain; the sequence is GVLFRARYLG…VLNSQELLGD (185 aa). PDZ domains follow at residues 801 to 886 and 892 to 968; these read EVVV…TVVS and EVRI…MPTS.

In terms of assembly, interacts (via N-terminus) with egl-9 isoform e (via catalytic domain); the interaction regulates its trafficking; the interaction is direct. Interacts with rab-6.2 (in GTP-bound form). Post-translationally, phosphorylated on multiple Ser and Thr residues by cdk-5 which regulates its localization. May be hydroxylated by egl-9 isoform e on multiple Pro residues which may prevent phosphorylation by cdk-5. In terms of tissue distribution, expressed in vulval epithelial cells and neurons.

Its subcellular location is the golgi apparatus. It localises to the golgi stack membrane. The protein localises to the trans-Golgi network membrane. It is found in the cytoplasm. The protein resides in the synapse. Its subcellular location is the perikaryon. Required specifically for the determination of 3 vulval precursor cell fates P5.p, P6.p and P7.p during late second and early third larval stages; required for basolateral localization of receptor tyrosine kinase let-23. Could have a general but redundant role in development, functioning in diverse cell lineages to control cell fates. Regulates the trafficking of the glr-1 subunit of AMPA-type glutamate receptors (AMPRs) in the ventral nerve cord. This may be partly through interacting with the small GTPase rab-6.2 in its active GTP-bound state. This chain is Protein lin-10, found in Caenorhabditis elegans.